A 429-amino-acid chain; its full sequence is Dual-specificity RNA methyltransferase RlmN (429 aa).

A disordered region spans residues 1-23; that stretch reads MRAMQTHTEIAPMPIPGHVDPVP. Glutamate 128 acts as the Proton acceptor in catalysis. The region spanning 134 to 397 is the Radical SAM core domain; it reads DADRGTLCVS…APVRTPRGRD (264 aa). Cysteine 141 and cysteine 402 are oxidised to a cystine. 3 residues coordinate [4Fe-4S] cluster: cysteine 148, cysteine 152, and cysteine 155. S-adenosyl-L-methionine-binding positions include 226–227, serine 258, 280–282, and asparagine 359; these read GE and SLH. Cysteine 402 serves as the catalytic S-methylcysteine intermediate.

The protein belongs to the radical SAM superfamily. RlmN family. [4Fe-4S] cluster is required as a cofactor.

It localises to the cytoplasm. It catalyses the reaction adenosine(2503) in 23S rRNA + 2 reduced [2Fe-2S]-[ferredoxin] + 2 S-adenosyl-L-methionine = 2-methyladenosine(2503) in 23S rRNA + 5'-deoxyadenosine + L-methionine + 2 oxidized [2Fe-2S]-[ferredoxin] + S-adenosyl-L-homocysteine. The catalysed reaction is adenosine(37) in tRNA + 2 reduced [2Fe-2S]-[ferredoxin] + 2 S-adenosyl-L-methionine = 2-methyladenosine(37) in tRNA + 5'-deoxyadenosine + L-methionine + 2 oxidized [2Fe-2S]-[ferredoxin] + S-adenosyl-L-homocysteine. Functionally, specifically methylates position 2 of adenine 2503 in 23S rRNA and position 2 of adenine 37 in tRNAs. m2A2503 modification seems to play a crucial role in the proofreading step occurring at the peptidyl transferase center and thus would serve to optimize ribosomal fidelity. The protein is Dual-specificity RNA methyltransferase RlmN of Novosphingobium aromaticivorans (strain ATCC 700278 / DSM 12444 / CCUG 56034 / CIP 105152 / NBRC 16084 / F199).